A 143-amino-acid polypeptide reads, in one-letter code: Transcriptional regulator MraZ (143 aa).

SpoVT-AbrB domains follow at residues Glu5 to Glu47 and Ala76 to Arg119.

This sequence belongs to the MraZ family. In terms of assembly, forms oligomers.

The protein localises to the cytoplasm. It is found in the nucleoid. This is Transcriptional regulator MraZ from Enterococcus hirae.